Consider the following 282-residue polypeptide: MTQDPSSQISWSQTIVLSIVQGLTEFLPISSSGHLRIVSELFWGKDAGASFTAVVQLGTEAAVLVYFAKDIAKILTGWFRGLFDKKQRGFDYRMGWMVIVGTLPVSIVGLLAKDIIRDNLRNMWITASVLIAFSFVFIAAEKWGSKRRSFDQLTMRDAVIMGCAQCLALIPGVSRSGGTVSAGLFVGLDREVATRFSFLLAIPAVLASGLFSLPDAFAPDAGQAASGMQLAVGTGIAFALGYASIAWLLKFVGSHSFSWFAAYRIPVGLLVMALLATGMLTA.

5 helical membrane passes run 96–116 (WMVI…KDII), 123–143 (MWIT…AEKW), 198–218 (FLLA…DAFA), 229–249 (QLAV…AWLL), and 260–280 (FAAY…TGML).

This sequence belongs to the UppP family.

The protein localises to the cell membrane. The catalysed reaction is di-trans,octa-cis-undecaprenyl diphosphate + H2O = di-trans,octa-cis-undecaprenyl phosphate + phosphate + H(+). Catalyzes the dephosphorylation of undecaprenyl diphosphate (UPP). Confers resistance to bacitracin. In Corynebacterium diphtheriae (strain ATCC 700971 / NCTC 13129 / Biotype gravis), this protein is Undecaprenyl-diphosphatase.